The primary structure comprises 259 residues: UPF0246 protein VSAL_I2547 (259 aa).

This sequence belongs to the UPF0246 family.

The polypeptide is UPF0246 protein VSAL_I2547 (Aliivibrio salmonicida (strain LFI1238) (Vibrio salmonicida (strain LFI1238))).